The following is a 123-amino-acid chain: MAKKRYRKVTEGIAHIKATFNNTMISVSDPQGNVLCFRSAGGSGFKGSRKGTPYGAQMASEEVGRLARDNFDMRRIAVRVKGPGAGRDSAIRGLRSAGLEVIHLEDRTPLPHNGCRPRKKRRV.

The protein belongs to the universal ribosomal protein uS11 family. In terms of assembly, part of the 30S ribosomal subunit. Interacts with proteins S7 and S18. Binds to IF-3.

In terms of biological role, located on the platform of the 30S subunit, it bridges several disparate RNA helices of the 16S rRNA. Forms part of the Shine-Dalgarno cleft in the 70S ribosome. The polypeptide is Small ribosomal subunit protein uS11 (Coxiella burnetii (strain CbuG_Q212) (Coxiella burnetii (strain Q212))).